Consider the following 281-residue polypeptide: Ras-related protein Rab-40C (281 aa).

GTP contacts are provided by Ser23, Gly26, Lys27, and Ser46. A switch-I region spans residues 41–49; the sequence is SPYAYSNGI. Mg(2+) is bound by residues Ser46 and Asp69. 3 residues coordinate GTP: Gly72, Asn126, and Arg127. Residues 72–88 are switch-II; it reads GQGRFCTIFRSYSRGAQ. The region spanning 175 to 228 is the SOCS box domain; that stretch reads LMRHGMEKIWRPNRVFSLQDLCCRAIVSCTPVHLIDKLPLPVTIKSHLKSFSMA. A disordered region spans residues 245–281; sequence SGAGGSGSKGNSLKRSKSIRPPQSPPQNCSRSNCKIS. Positions 270-281 are enriched in polar residues; the sequence is PQNCSRSNCKIS. A lipid anchor (S-palmitoyl cysteine) is attached at Cys273. Cys278 carries S-geranylgeranyl cysteine lipidation.

Belongs to the small GTPase superfamily. Rab family. Component of the cullin-5-RING E3 ubiquitin-protein ligase complex (ECS(RAB40C) complex) composed of CUL5, Elongin BC (ELOB and ELOC), RNF7/RBX2 and RAB40C. Interacts with protein phosphatase 6 (PP6) complex components ANKRD28, ANKRD52, PPP6C, PP6R1 and PP6R2; the interaction leads to ANKRD28 ubiquitination and decreased PP6 activity. Interacts with DAB2IP; DAB2IP acts as a GAP for RAB40C. It depends on Mg(2+) as a cofactor.

It localises to the cell membrane. It is found in the cytoplasm. The protein resides in the cytosol. Its subcellular location is the golgi apparatus membrane. The catalysed reaction is GTP + H2O = GDP + phosphate + H(+). It functions in the pathway protein modification; protein ubiquitination. Its activity is regulated as follows. Regulated by guanine nucleotide exchange factors (GEFs) which promote the exchange of bound GDP for free GTP. Regulated by GTPase activating proteins (GAPs) including DAB2IP, which increase the GTP hydrolysis activity. Inhibited by GDP dissociation inhibitors (GDIs). Functionally, RAB40C small GTPase acts as substrate-recognition component of the ECS(RAB40C) E3 ubiquitin ligase complex which mediates the ubiquitination and subsequent proteasomal degradation of target proteins. The Rab40 subfamily belongs to the Rab family that are key regulators of intracellular membrane trafficking, from the formation of transport vesicles to their fusion with membranes. Rabs cycle between an inactive GDP-bound form and an active GTP-bound form that is able to recruit to membranes different sets of downstream effectors directly responsible for vesicle formation, movement, tethering and fusion. As part of the ECS(RAB40C) complex, mediates ANKRD28 ubiquitination and degradation, thereby inhibiting protein phosphatase 6 (PP6) complex activity and focal adhesion assembly during cell migration. Also negatively regulate lipid droplets accumulation in a GTP-dependent manner. This Mus musculus (Mouse) protein is Ras-related protein Rab-40C.